Here is a 340-residue protein sequence, read N- to C-terminus: Sulfotransferase ppzF (340 aa).

Its pathway is secondary metabolite biosynthesis. Functionally, sulfotransferase; part of the gene cluster that mediates the biosynthesis of pyrrolopyrazines, secondary metabolites showing insecticidal activity. The role of ppzF within the pathway has still to be determined. The single multifunctional NRPS ppzA is sufficient to produce peramine via condensation of 1-pyrroline-5-carboxylate and arginine, N-methylation of the alpha-amino group of arginine and reduction of the thioester and the cyclization to form an iminium ion resulting in release from the peptide synthetase. Deprotonation of this intermediate and oxidation of the pyrroline ring would give rise to peramine. In Epichloe species that produce only peramine, the peramine synthetase gene is not localized in a gene cluster, in contrast to Metarhizium species that contain additional pyrrolopyrazine biosynthesis genes. The 2-oxoglutarate-Fe(II) type oxidoreductase ppzC hydroxylates peramine to yield the newly identified compound 8-hydroxyperamine whereas ppzD converts L-proline into trans-4-hydroxy-L-proline, a precursor of peramine biosynthesis. The protein is Sulfotransferase ppzF of Metarhizium majus (strain ARSEF 297).